The chain runs to 557 residues: Urocanate hydratase (557 aa).

NAD(+)-binding positions include 52 to 53, Gln-130, 176 to 178, Glu-196, Arg-201, 242 to 243, 263 to 267, 273 to 274, and Tyr-322; these read GG, GMG, NA, QTSAH, and YL. Residue Cys-410 is part of the active site. Gly-492 provides a ligand contact to NAD(+).

This sequence belongs to the urocanase family. NAD(+) is required as a cofactor.

The protein resides in the cytoplasm. The enzyme catalyses 4-imidazolone-5-propanoate = trans-urocanate + H2O. Its pathway is amino-acid degradation; L-histidine degradation into L-glutamate; N-formimidoyl-L-glutamate from L-histidine: step 2/3. In terms of biological role, catalyzes the conversion of urocanate to 4-imidazolone-5-propionate. In Allorhizobium ampelinum (strain ATCC BAA-846 / DSM 112012 / S4) (Agrobacterium vitis (strain S4)), this protein is Urocanate hydratase.